The primary structure comprises 135 residues: uncharacterized protein (135 aa).

Residues 2-71 enclose the HTH merR-type domain; sequence TYTTAKAAEK…LKDIKRFAEC (70 aa). A DNA-binding region (H-T-H motif) is located at residues 5–24; that stretch reads TAKAAEKIGISAYTLRFYDK.

This is an uncharacterized protein from Haemophilus influenzae (strain ATCC 51907 / DSM 11121 / KW20 / Rd).